The primary structure comprises 484 residues: Putative cysteine ligase BshC (484 aa).

Residues 372–435 are a coiled coil; the sequence is RAFRDRVEGL…AARDEVLARH (64 aa).

Belongs to the BshC family.

In Thermus thermophilus (strain ATCC BAA-163 / DSM 7039 / HB27), this protein is Putative cysteine ligase BshC.